Consider the following 121-residue polypeptide: Large ribosomal subunit protein bL19 (121 aa).

It belongs to the bacterial ribosomal protein bL19 family.

Its function is as follows. This protein is located at the 30S-50S ribosomal subunit interface and may play a role in the structure and function of the aminoacyl-tRNA binding site. The sequence is that of Large ribosomal subunit protein bL19 from Chlorobium phaeovibrioides (strain DSM 265 / 1930) (Prosthecochloris vibrioformis (strain DSM 265)).